We begin with the raw amino-acid sequence, 350 residues long: Core protein VP7 (350 aa).

N-linked (GlcNAc...) asparagine; by host glycosylation is present at Asn-45.

This sequence belongs to the orbivirus VP7 family. As to quaternary structure, homotrimer.

The protein localises to the virion. Its function is as follows. Major structural core protein; binds to structural protein VP3. Constitutes the surface of the AHSV core. The polypeptide is Core protein VP7 (Segment-7) (African horse sickness virus (AHSV)).